A 135-amino-acid chain; its full sequence is Large ribosomal subunit protein uL16c (135 aa).

The span at 1-17 shows a compositional bias: basic residues; that stretch reads MLSPKRTRFRKQHRGRM. Residues 1–21 form a disordered region; sequence MLSPKRTRFRKQHRGRMKGVS.

The protein belongs to the universal ribosomal protein uL16 family. Part of the 50S ribosomal subunit.

Its subcellular location is the plastid. It localises to the chloroplast. In Amborella trichopoda, this protein is Large ribosomal subunit protein uL16c.